The sequence spans 267 residues: Serine/threonine-protein kinase 1 (267 aa).

The Protein kinase domain maps to 18 to 266 (IQNNVRLVDG…YETVIKHSFL (249 aa)). ATP contacts are provided by residues 24-32 (LVDGKFGKM) and K47. The active-site Proton acceptor is D134.

This sequence belongs to the protein kinase superfamily. Ser/Thr protein kinase family.

It catalyses the reaction L-seryl-[protein] + ATP = O-phospho-L-seryl-[protein] + ADP + H(+). It carries out the reaction L-threonyl-[protein] + ATP = O-phospho-L-threonyl-[protein] + ADP + H(+). The polypeptide is Serine/threonine-protein kinase 1 (PK1) (Heliothis zea nuclear polyhedrosis virus (HzSNPV)).